The chain runs to 869 residues: H(+)/Cl(-) exchange transporter 6 (869 aa).

Over 1 to 80 (MAGCRGSLCC…KKGRWYEVVK (80 aa)) the chain is Cytoplasmic. A run of 2 helical transmembrane segments spans residues 81–113 (WTVVFAIGVCTGLVGLFVDFFVQLFTQLKFGVV) and 128–150 (LSLLELLGFNLTFVFLASLLVLI). Residues 156–160 (GSGIP) carry the Selectivity filter part_1 motif. Residue Ser-157 participates in chloride binding. The helical intramembrane region spans 159-166 (IPEIKCYL). Transmembrane regions (helical) follow at residues 176-194 (RLRTLLCKVFGVLFSVAGG) and 200-217 (EGPMIHSGAVVGAGLPQF). Positions 198–202 (GKEGP) match the Selectivity filter part_2 motif. Intramembrane regions (helical) lie at residues 241 to 253 (FVSAGAAAGIAAA) and 257 to 265 (PIGATLFSL). 3 helical membrane-spanning segments follow: residues 277-294 (TWKVLFCSMSATFTLNFF), 335-364 (GFFVVMGVIGGLLGATFNCLNKRLAKYRMR), and 371-392 (KLVRVLESLLVSLVTTLVVFVA). N-linked (GlcNAc...) asparagine glycans are attached at residues Asn-410, Asn-422, and Asn-432. 2 helical membrane passes run 462 to 481 (PITLALFFVLYFLLACWTYG) and 487 to 511 (GLFVPSLLCGAAFGRLVANVLKSYI). Residues 487-491 (GLFVP) carry the Selectivity filter part_3 motif. Phe-489 is a chloride binding site. Residues 519 to 533 (GTFSLIGAAALLGGV) constitute an intramembrane region (helical). The note=Loop between two helices intramembrane region spans 534 to 536 (VRM). An intramembrane region (helical) is located at residues 537–548 (TISLTVILIEST). The segment at residues 549 to 552 (NEIT) is an intramembrane region (note=Loop between two helices). Residues 553 to 571 (YGLPIMITLMVAKWTGDFF) form a helical membrane-spanning segment. The Cytoplasmic portion of the chain corresponds to 572-869 (NKGIYDIHVG…ARLRQHYQTI (298 aa)). Tyr-576 serves as a coordination point for chloride. The region spanning 605 to 662 (MEPNLTYVYPHTRIQSLVSILRTTVHHAFPVVTENRGNEKEFMKGNQLISNNIKFKKS) is the CBS 1 domain. 630 to 632 (HHA) contacts ATP. A disordered region spans residues 668-687 (AGEQRRRSQSMKSYPSSELR). Positions 677-686 (SMKSYPSSEL) are enriched in polar residues. Ser-773 bears the Phosphoserine mark. The region spanning 807 to 868 (MNPSPFTVSP…QARLRQHYQT (62 aa)) is the CBS 2 domain. 849 to 852 (TRHN) is a binding site for ATP.

It belongs to the chloride channel (TC 2.A.49) family. ClC-6/CLCN6 subfamily. Post-translationally, N-glycosylated on several asparagine residues.

Its subcellular location is the late endosome membrane. The catalysed reaction is 2 chloride(in) + H(+)(out) = 2 chloride(out) + H(+)(in). Voltage-gated channel mediating the exchange of chloride ions against protons. Functions as antiporter and contributes to the acidification of the late endosome lumen. The CLC channel family contains both chloride channels and proton-coupled anion transporters that exchange chloride or another anion for protons. The presence of conserved gating glutamate residues is typical for family members that function as antiporters. The chain is H(+)/Cl(-) exchange transporter 6 (CLCN6) from Oryctolagus cuniculus (Rabbit).